Here is a 100-residue protein sequence, read N- to C-terminus: Gas vesicle protein J (100 aa).

The protein belongs to the gas vesicle GvpA family. Interacts with GvpA.

It is found in the gas vesicle. A minor component of the gas vesicle, might be involved in nucleating gas vesicle formation. This protein could be important for the shape determination of the gas vesicle. Gas vesicles (GV) are hollow, gas filled proteinaceous nanostructures. During planktonic growth they allow positioning of the organism at a favorable depth for light or nutrient acquisition. Functionally, when a minimal gvp locus (gvpA2-gvpR-gvpN-gvpF-gvpG-gvpL-gvpS-gvpK-gvpJ-gvpT-gvpU, called pNL29) is expressed in E.coli gas vesicles are made. This is Gas vesicle protein J from Priestia megaterium (Bacillus megaterium).